The sequence spans 912 residues: Receptor protein kinase WSS1 (912 aa).

An N-terminal signal peptide occupies residues 1 to 27 (MGRDARRLPLLPFLLLLLAAAAGVAES). At 28–477 (ATDAEAIHDL…AGGGKSKPNT (450 aa)) the chain is on the extracellular side. LRR repeat units follow at residues 64–88 (AGKVTELNLADRGLSGTLPDSLSSL), 89–111 (TSLTALQLQGNALTGAVPSLARM), and 112–134 (GSLARLALDGNAFTSLPPDFLHG). Residues Asn-159, Asn-170, Asn-196, Asn-256, Asn-286, Asn-371, Asn-376, Asn-387, and Asn-400 are each glycosylated (N-linked (GlcNAc...) asparagine). LRR repeat units lie at residues 184–208 (LVSLRNLRLSYNNLTGGLPPELSSL), 235–261 (MKSLKLLWIQSNKFTGPIPDLNGTQLE), 281–303 (LMSLKNVSLSNNNFQGPKPAFAA), 364–388 (SSDVSMINLSRKNLSGRISPALANL), 389–411 (TRLARLDLSNNNLTGVIPDVLTT), and 413–438 (PSLTVLNVANNRLTGEVPKFKPSVNV). Residues 448–472 (SSGSSGGGGGSDGDSSSSDSAGGGK) are disordered. Residues 478-498 (GMIIGIIVAVIILFACIALLV) form a helical membrane-spanning segment. The Cytoplasmic segment spans residues 499 to 912 (HHRKKKNVEK…SFNVPRKYNG (414 aa)). The 280-residue stretch at 580 to 859 (FSEDCILGRG…HCVNRLSSLV (280 aa)) folds into the Protein kinase domain. Residues 586 to 594 (LGRGGFGVV) and Lys-607 each bind ATP. The Proton acceptor role is filled by Asp-708.

It belongs to the protein kinase superfamily. Ser/Thr protein kinase family. Mn(2+) serves as cofactor. In terms of tissue distribution, expressed in young and mature leaves.

It localises to the cell membrane. It catalyses the reaction L-seryl-[protein] + ATP = O-phospho-L-seryl-[protein] + ADP + H(+). The catalysed reaction is L-threonyl-[protein] + ATP = O-phospho-L-threonyl-[protein] + ADP + H(+). Its function is as follows. Transmembrane kinase receptor involved in the regulation of reactive oxygen species (ROS) homeostasis, chloroplast development and leaf senescence. The polypeptide is Receptor protein kinase WSS1 (Oryza sativa subsp. japonica (Rice)).